The following is a 354-amino-acid chain: Guanine nucleotide-binding protein alpha-3 subunit (354 aa).

A lipid anchor (N-myristoyl glycine) is attached at G2. C4 carries S-palmitoyl cysteine lipidation. The 323-residue stretch at 32–354 folds into the G-alpha domain; that stretch reads KVVKLLLLGA…QANLQGCGLY (323 aa). The interval 35-48 is G1 motif; that stretch reads KLLLLGAGECGKST. GTP contacts are provided by residues 40-47, 176-182, 201-205, 270-273, and A326; these read GAGECGKS, LLSRIKT, DVGGQ, and NKKD. 2 residues coordinate Mg(2+): S47 and T182. Residues 174 to 182 are G2 motif; that stretch reads DILLSRIKT. Positions 197-206 are G3 motif; that stretch reads FRVFDVGGQR. Positions 266-273 are G4 motif; the sequence is ILFLNKKD. A G5 motif region spans residues 324–329; it reads TCATDT.

It belongs to the G-alpha family. G(q) subfamily. As to quaternary structure, g proteins are composed of 3 units; alpha, beta and gamma. The alpha chain contains the guanine nucleotide binding site.

Its function is as follows. Guanine nucleotide-binding proteins (G proteins) are involved as modulators or transducers in various transmembrane signaling systems. Promotes transcription of 3',5'-cyclic phosphodiesterases pde-1 and pde-5, leading to reduced cGMP levels in sensory neurons. This causes suppression of insulin production and signaling which leads to increased daf-16 activity and contributes to increased adult lifespan and resistance to oxidative stress. In addition, by reducing cGMP levels, inhibits TGF-beta signaling pathways. Involved in behavioral response to P.aeruginosa by controlling the expression of daf-7, a member of the TGF-beta family, in ASJ sensory neurons. This is Guanine nucleotide-binding protein alpha-3 subunit (gpa-3) from Caenorhabditis briggsae.